Reading from the N-terminus, the 91-residue chain is Antitoxin RelJ (91 aa).

The protein belongs to the phD/YefM antitoxin family. As to quaternary structure, homodimer.

Functionally, antitoxin component of a type II toxin-antitoxin (TA) system. A probable antitoxin for the putative mRNA interferase RelK. This chain is Antitoxin RelJ (relJ), found in Mycobacterium tuberculosis (strain CDC 1551 / Oshkosh).